We begin with the raw amino-acid sequence, 1517 residues long: MDNQQDKVIAASANGENNLINGVKENDSEEQDVAMKSFAALEASTPIQPIPVVQKESPMFPRGLLPLPSKKPCMQSPPSPLGLIEAPDHSATGASVNAISLTSGVAKGLNTWSLPNECEKAPFAIMEPAGISALNGDCLMQPSRTCLGCFMESKEAVDPEPGISLKVGDLNRDYETCAVSDIGIQCINAGENLKYGEQLLSDQLLGFPLHKSRAGDRRESEKPDIDLEDPTQKSYYEALLLDKCNTEEALLANSNQDWGYFETFISESKIELLDLCSKNELSVNLFSEEDVENYMFDDDESTLGSDVCSLKIRYESFQDNVRDKTTLLMQEDAQFNFFPSVFTTCPKRESKSGVLKQSSDLSQFKVPDVSIIWGDEDKNLDKKKGKEEVHEDKSIEKKDEKDNGEKPALNNKPCSGLEVEQFKNLKPDHLTNSLETSGNFSDDSSFIEVSYDAMGEIKDCSRYMARDTNSGSSSSQQNYGLRAKRKVRYSEDYLYDVDSLEGEKVNERKEWPPGGSKEEDDDEWCPKKRRKVTRKEPPVIIKYIIINRFKGEKNMLVKLGKVDASETTVNLSESQLSKYAKLSPLKGFWQKKKKQKNGNTDSVKTPFCQKQSFEPGSFEVSFLPPARKRKSKLGNRHRIQRIQSMEASASSKQVSFGSDQKQASNRKEEGGLKGTPKSALLAAPSSANGSHLRGLIGPDSAKVKAQDTEFKGPERKVLNKIKFKSEARLKSKKIKTGQENKPVVQMSPVSEDPSSKANLKNEVTPGTSNSSHMSEFHETKVVKNSTFLPTTCSSEMPLSSANVATNIPVIPGGYLQTLLDASDLSNNTSISYFTNHSAEQNEASLSQTEKAFAPLQSAQDCVLSSSSDSQLQQSSQNFKMEASNYGSLWPDKDTSGSQEFMTEVSGEIATSQSSEFEATQVVSMENNLTAITYSPVCLNSGGSGCNKVLYASVQDSHLAPDDSYQLCHFNNGEICFPFQQGPISTEDDGQLFSFDSMTPLSVSSSSYCPLSLKSCEKDGDDDINDDFLAHCSPKLVIQQSIDEIAPLKESTDLLDISNFTPDKFRHSSLSEMSPPDTPSLSPQSTRCESIKTLGTMKGFQEGVPGSLSSMEKIKWDCSTLSQQVQADDGFTLNNHQFQFHMFNDEDSVGLLQKNPCLSTFDEPAGQISANNKVSKSRKKTSPGKSGAVSQSSSQKNTRKKSPKASNKGVEKPPSKTSRQVPKSAKKGKYVAAVNGEKMQIGIGHSGGQPNSTSSNGKTLTECIQHGGPVAPMKIPSQKGLSGDWALGKESRPGWNDMSVVTNTNNLLDDDQREFQEPSYILSNIASGMADVQRFMMASMEPLWEPMEHQGESNTFYSPDSNSLKLKTLKILAGTPQESKKKINNGSSGATKNHRSIKAVSKSSGKAAVGDPGHADVSGSSEDSRSAFFDKKYSNMNTLGNNGPTHKKLYRHKSSSKTLRDEKYKGKRVEREQIHKDEAGTTCFEKLRGSSYNLLKAETAFGVLPVFEEETHIFQKDI.

Over residues 381-405 (DKKKGKEEVHEDKSIEKKDEKDNGE) the composition is skewed to basic and acidic residues. Disordered stretches follow at residues 381 to 416 (DKKK…PCSG), 505 to 529 (VNER…PKKR), 644 to 697 (SMEA…GLIG), 732 to 775 (KKIK…HMSE), 1065 to 1084 (RHSS…SPQS), 1161 to 1228 (DEPA…KKGK), and 1372 to 1422 (AGTP…SSED). The segment covering 644-663 (SMEASASSKQVSFGSDQKQA) has biased composition (polar residues). Low complexity predominate over residues 678 to 687 (SALLAAPSSA). Polar residues predominate over residues 764 to 773 (TPGTSNSSHM).

The protein resides in the nucleus. The protein localises to the cytoplasm. Functionally, involved in neurite outgrowth by regulating cell-cell adhesion via the N-cadherin signaling pathway. May act by regulating expression of protein-coding genes, such as N-cadherins and integrin beta-1 (ITGB1). The protein is Neurite extension and migration factor of Rattus norvegicus (Rat).